Here is a 337-residue protein sequence, read N- to C-terminus: S-adenosylmethionine:tRNA ribosyltransferase-isomerase (337 aa).

Belongs to the QueA family. Monomer.

The protein resides in the cytoplasm. It carries out the reaction 7-aminomethyl-7-carbaguanosine(34) in tRNA + S-adenosyl-L-methionine = epoxyqueuosine(34) in tRNA + adenine + L-methionine + 2 H(+). Its pathway is tRNA modification; tRNA-queuosine biosynthesis. Functionally, transfers and isomerizes the ribose moiety from AdoMet to the 7-aminomethyl group of 7-deazaguanine (preQ1-tRNA) to give epoxyqueuosine (oQ-tRNA). In Legionella pneumophila subsp. pneumophila (strain Philadelphia 1 / ATCC 33152 / DSM 7513), this protein is S-adenosylmethionine:tRNA ribosyltransferase-isomerase.